A 236-amino-acid chain; its full sequence is tRNA1(Val) (adenine(37)-N6)-methyltransferase (236 aa).

The protein belongs to the methyltransferase superfamily. tRNA (adenine-N(6)-)-methyltransferase family.

It is found in the cytoplasm. The catalysed reaction is adenosine(37) in tRNA1(Val) + S-adenosyl-L-methionine = N(6)-methyladenosine(37) in tRNA1(Val) + S-adenosyl-L-homocysteine + H(+). In terms of biological role, specifically methylates the adenine in position 37 of tRNA(1)(Val) (anticodon cmo5UAC). This Aeromonas salmonicida (strain A449) protein is tRNA1(Val) (adenine(37)-N6)-methyltransferase.